Consider the following 438-residue polypeptide: Glutamate-1-semialdehyde 2,1-aminomutase (438 aa).

Position 274 is an N6-(pyridoxal phosphate)lysine (K274).

The protein belongs to the class-III pyridoxal-phosphate-dependent aminotransferase family. HemL subfamily. As to quaternary structure, homodimer. Pyridoxal 5'-phosphate serves as cofactor.

Its subcellular location is the cytoplasm. The enzyme catalyses (S)-4-amino-5-oxopentanoate = 5-aminolevulinate. It participates in porphyrin-containing compound metabolism; protoporphyrin-IX biosynthesis; 5-aminolevulinate from L-glutamyl-tRNA(Glu): step 2/2. This chain is Glutamate-1-semialdehyde 2,1-aminomutase, found in Salinibacter ruber (strain DSM 13855 / M31).